A 320-amino-acid polypeptide reads, in one-letter code: Lactamase-like protein GME11357 (320 aa).

Residues histidine 106, histidine 108, aspartate 110, and histidine 111 each contribute to the Zn(2+) site. The active-site Proton donor/acceptor is aspartate 110.

Belongs to the metallo-beta-lactamase superfamily. Zn(2+) serves as cofactor.

Its pathway is secondary metabolite biosynthesis. Lactamase-like protein; part of the gene cluster that mediates the biosynthesis of dibenzodioxocinones such as pestalotiollide B, a novel class of inhibitors against cholesterol ester transfer protein (CEPT). The biosynthesis initiates from condensation of acetate and malonate units catalyzed by the non-reducing PKS pks8/GME11356. Pks8/GME11356 lacks a thioesterase (TE) domain, which is important to the cyclizing of the third ring of atrochrysone carboxylic acid, and the esterase GME11355 might play the role of TE and catalyzes the cyclization reaction of the C ring. The lactamase-like protein GME11357 (or other beta-lactamases in Pestalotiopsis microspora) probably hydrolyzes the thioester bond between the ACP of pks8/GME11356 and the intermediate to release atrochrysone carboxylic acid, which is spontaneously dehydrates to form endocrocin anthrone. Endocrocin anthrone is further converted to emodin via the endocrocin intermediate. Emodin is then oxidized by several enzymes such as the Baeyer-Villiger oxidase GME11358, the oxidoreductase GME11367, the short chain dehydrogenase/reductase GME11373, as well as by other oxidoreductases from the cluster, to modify the A and C rings and open the B ring, and finally yield monodictyphenone. The prenyltransferase GME11375 may catalyze the addition reaction between the C5 side chains and the carbon bone of dibenzodioxocinones. The remaining biochemical reactions to the final product dibenzodioxocinones should be methylation catalyzed by methyltransferase GME11366 and reduction and lactonization reaction catalyzed by a series of oxidordeuctases. The protein is Lactamase-like protein GME11357 of Pestalotiopsis microspora.